Here is an 84-residue protein sequence, read N- to C-terminus: CDC42 small effector protein 2 (84 aa).

S-palmitoyl cysteine attachment occurs at residues cysteine 10 and cysteine 11. Positions 29 to 42 (IGEPTNFVHTAHVG) constitute a CRIB domain. Phosphoserine is present on residues serine 43 and serine 52.

Belongs to the CDC42SE/SPEC family. As to quaternary structure, interacts with CDC42 (in GTP-bound form). Interacts weakly with RAC1 and not at all with RHOA.

It localises to the cytoplasm. The protein localises to the cytoskeleton. Its subcellular location is the cell membrane. It is found in the cell projection. The protein resides in the phagocytic cup. Probably involved in the organization of the actin cytoskeleton by acting downstream of CDC42, inducing actin filament assembly. Alters CDC42-induced cell shape changes. In activated T-cells, may play a role in CDC42-mediated F-actin accumulation at the immunological synapse. May play a role in early contractile events in phagocytosis in macrophages. In Bos taurus (Bovine), this protein is CDC42 small effector protein 2 (CDC42SE2).